The chain runs to 164 residues: MTQIDYTRAAKYFLLQDFWVGMKLGLKYFFSPKATINYPHEKGPLSPRFRGEHALRRYPNGEERCIACKLCEAICPAQAITIDAEPREDGSRRTTRYDIDMTKCIYCGFCQEACPVDAIVEGPNFEFATETREELFYDKEKLLSNGDRWEAEIARNLELDAPYR.

4Fe-4S ferredoxin-type domains are found at residues 55–85 and 95–124; these read LRRYPNGEERCIACKLCEAICPAQAITIDAE and TRYDIDMTKCIYCGFCQEACPVDAIVEGPN. 8 residues coordinate [4Fe-4S] cluster: C65, C68, C71, C75, C104, C107, C110, and C114.

Belongs to the complex I 23 kDa subunit family. In terms of assembly, NDH-1 is composed of 14 different subunits. Subunits NuoA, H, J, K, L, M, N constitute the membrane sector of the complex. [4Fe-4S] cluster is required as a cofactor.

The protein resides in the cell inner membrane. It catalyses the reaction a quinone + NADH + 5 H(+)(in) = a quinol + NAD(+) + 4 H(+)(out). In terms of biological role, NDH-1 shuttles electrons from NADH, via FMN and iron-sulfur (Fe-S) centers, to quinones in the respiratory chain. The immediate electron acceptor for the enzyme in this species is believed to be ubiquinone. Couples the redox reaction to proton translocation (for every two electrons transferred, four hydrogen ions are translocated across the cytoplasmic membrane), and thus conserves the redox energy in a proton gradient. The sequence is that of NADH-quinone oxidoreductase subunit I from Ruegeria pomeroyi (strain ATCC 700808 / DSM 15171 / DSS-3) (Silicibacter pomeroyi).